The following is a 171-amino-acid chain: Translationally-controlled tumor protein homolog (171 aa).

One can recognise a TCTP domain in the interval Met1–Cys171.

This sequence belongs to the TCTP family.

It is found in the cytoplasm. Involved in calcium binding and microtubule stabilization. This chain is Translationally-controlled tumor protein homolog (tpt1), found in Labeo rohita (Indian major carp).